We begin with the raw amino-acid sequence, 362 residues long: Chorismate synthase (362 aa).

NADP(+) is bound by residues arginine 48 and arginine 54. Residues arginine 125–serine 127, asparagine 237–alanine 238, glycine 277, lysine 292–serine 296, and arginine 318 contribute to the FMN site.

It belongs to the chorismate synthase family. In terms of assembly, homotetramer. The cofactor is FMNH2.

It carries out the reaction 5-O-(1-carboxyvinyl)-3-phosphoshikimate = chorismate + phosphate. Its pathway is metabolic intermediate biosynthesis; chorismate biosynthesis; chorismate from D-erythrose 4-phosphate and phosphoenolpyruvate: step 7/7. Its function is as follows. Catalyzes the anti-1,4-elimination of the C-3 phosphate and the C-6 proR hydrogen from 5-enolpyruvylshikimate-3-phosphate (EPSP) to yield chorismate, which is the branch point compound that serves as the starting substrate for the three terminal pathways of aromatic amino acid biosynthesis. This reaction introduces a second double bond into the aromatic ring system. This Idiomarina loihiensis (strain ATCC BAA-735 / DSM 15497 / L2-TR) protein is Chorismate synthase.